The primary structure comprises 249 residues: ATP synthase subunit a, chloroplastic (249 aa).

5 helical membrane passes run 40–60, 97–117, 136–156, 201–221, and 222–242; these read QVLI…VLAI, VPFI…GALL, INTT…AGLS, LVVV…VMFL, and GLFT…AYIG.

The protein belongs to the ATPase A chain family. In terms of assembly, F-type ATPases have 2 components, CF(1) - the catalytic core - and CF(0) - the membrane proton channel. CF(1) has five subunits: alpha(3), beta(3), gamma(1), delta(1), epsilon(1). CF(0) has four main subunits: a, b, b' and c.

It localises to the plastid. The protein localises to the chloroplast thylakoid membrane. Its function is as follows. Key component of the proton channel; it plays a direct role in the translocation of protons across the membrane. The polypeptide is ATP synthase subunit a, chloroplastic (Capsella bursa-pastoris (Shepherd's purse)).